The primary structure comprises 315 residues: Methionyl-tRNA formyltransferase (315 aa).

(6S)-5,6,7,8-tetrahydrofolate is bound at residue 113–116; it reads SLLP.

It belongs to the Fmt family.

It catalyses the reaction L-methionyl-tRNA(fMet) + (6R)-10-formyltetrahydrofolate = N-formyl-L-methionyl-tRNA(fMet) + (6S)-5,6,7,8-tetrahydrofolate + H(+). In terms of biological role, attaches a formyl group to the free amino group of methionyl-tRNA(fMet). The formyl group appears to play a dual role in the initiator identity of N-formylmethionyl-tRNA by promoting its recognition by IF2 and preventing the misappropriation of this tRNA by the elongation apparatus. This chain is Methionyl-tRNA formyltransferase, found in Salmonella enteritidis PT4 (strain P125109).